We begin with the raw amino-acid sequence, 354 residues long: MGSGASAEDKELAKRSKELEKKLQEDADKEAKTVKLLLLGAGESGKSTIVKQMKIIHQDGYSPEECLEFKAIIYGNVLQSILAIIRAMTTLGIDYAEPSCADDGRQLNNLADSIEEGTMPPELVEVIRRLWKDGGVQACFERAAEYQLNDSASYYLNQLERITDPEYLPSEQDVLRSRVKTTGIIETKFSVKDLNFRMFDVGGQRSERKKWIHCFEGVTCIIFCAALSAYDMVLVEDDEVNRMHESLHLFNSICNHKFFAATSIVLFLNKKDLFEEKIKKVHLSICFPEYDGNNSYDDAGNYIKSQFLDLNMRKDVKEIYSHMTCATDTQNVKFVFDAVTDIIIKENLKDCGLF.

Residues Met-1–Ala-27 form a disordered region. Gly-2 is lipidated: N-myristoyl glycine. Over residues Ala-7–Ala-27 the composition is skewed to basic and acidic residues. Positions Lys-32 to Phe-354 constitute a G-alpha domain. The G1 motif stretch occupies residues Lys-35–Thr-48. GTP is bound by residues Gly-40–Ser-47, Leu-175–Thr-181, Asp-200–Gln-204, Asn-269–Asp-272, and Ala-326. Ser-47 contributes to the Mg(2+) binding site. A G2 motif region spans residues Asp-173–Thr-181. Arg-178 bears the ADP-ribosylarginine; by cholera toxin mark. Thr-181 serves as a coordination point for Mg(2+). Positions Phe-196–Arg-205 are G3 motif. The interval Val-265–Asp-272 is G4 motif. A G5 motif region spans residues Thr-324–Thr-329. Cys-351 is modified (ADP-ribosylcysteine; by pertussis toxin).

This sequence belongs to the G-alpha family. G(i/o/t/z) subfamily. In terms of assembly, g proteins are composed of 3 units; alpha, beta and gamma. The alpha chain contains the guanine nucleotide binding site. Retinal rod outer segment.

The protein resides in the cell projection. It is found in the cilium. Its subcellular location is the photoreceptor outer segment. The protein localises to the photoreceptor inner segment. In terms of biological role, guanine nucleotide-binding proteins (G proteins) are involved as modulators or transducers in various transmembrane signaling systems. Transducin is an amplifier and one of the transducers of a visual impulse that performs the coupling between rhodopsin and cGMP-phosphodiesterase. The sequence is that of Guanine nucleotide-binding protein G(t) subunit alpha-2 (GNAT2) from Homo sapiens (Human).